The primary structure comprises 231 residues: 5'-methylthioadenosine/S-adenosylhomocysteine nucleosidase (231 aa).

Glu12 serves as the catalytic Proton acceptor. Substrate is bound by residues Gly78, Val153, and 174–175 (ME). The active-site Proton donor is the Asp198.

This sequence belongs to the PNP/UDP phosphorylase family. MtnN subfamily.

It carries out the reaction S-adenosyl-L-homocysteine + H2O = S-(5-deoxy-D-ribos-5-yl)-L-homocysteine + adenine. It catalyses the reaction S-methyl-5'-thioadenosine + H2O = 5-(methylsulfanyl)-D-ribose + adenine. The enzyme catalyses 5'-deoxyadenosine + H2O = 5-deoxy-D-ribose + adenine. The protein operates within amino-acid biosynthesis; L-methionine biosynthesis via salvage pathway; S-methyl-5-thio-alpha-D-ribose 1-phosphate from S-methyl-5'-thioadenosine (hydrolase route): step 1/2. Functionally, catalyzes the irreversible cleavage of the glycosidic bond in both 5'-methylthioadenosine (MTA) and S-adenosylhomocysteine (SAH/AdoHcy) to adenine and the corresponding thioribose, 5'-methylthioribose and S-ribosylhomocysteine, respectively. Also cleaves 5'-deoxyadenosine, a toxic by-product of radical S-adenosylmethionine (SAM) enzymes, into 5-deoxyribose and adenine. The polypeptide is 5'-methylthioadenosine/S-adenosylhomocysteine nucleosidase (Vibrio campbellii (strain ATCC BAA-1116)).